The primary structure comprises 275 residues: MMNKICLYLPLFFSSLTMANEPVERVISLAPHATEIAYAAGLGDKLIAVSEMSDYPKEAGELEKVSNYQGIKLERIIALQPDLVIAWPAGNPAKELEKLKQFGVPIYYSTTGTLEDIANNIEQLSQYSDDPSKGQKAARDFREELTALKAKYNTTEKVRYFYQLSEKPIITVAGKNWPSEVFNFCGGENVFANTAAPYPQVSIEQVITRQPEVLFTSRHAMSDDGMWAQWKNELPALRNNHVWSLNSDWINRPTPRTLNAIIEVCEHFESVKRKR.

An N-terminal signal peptide occupies residues 1–19; the sequence is MMNKICLYLPLFFSSLTMA. The 248-residue stretch at 25–272 folds into the Fe/B12 periplasmic-binding domain; the sequence is RVISLAPHAT…EVCEHFESVK (248 aa). A disulfide bond links Cys-185 and Cys-265.

It belongs to the BtuF family. In terms of assembly, the complex is composed of two ATP-binding proteins (BtuD), two transmembrane proteins (BtuC) and a solute-binding protein (BtuF).

It is found in the periplasm. In terms of biological role, part of the ABC transporter complex BtuCDF involved in vitamin B12 import. Binds vitamin B12 and delivers it to the periplasmic surface of BtuC. This chain is Vitamin B12-binding protein, found in Vibrio parahaemolyticus serotype O3:K6 (strain RIMD 2210633).